A 249-amino-acid polypeptide reads, in one-letter code: Small ribosomal subunit protein uS3 (249 aa).

Residues 39–109 (IRTYVLARLK…EVKIDVVEVV (71 aa)) enclose the KH type-2 domain. Positions 226–239 (KERRNDAGARNRDS) are enriched in basic and acidic residues. Residues 226–249 (KERRNDAGARNRDSRTKRRHRTKR) are disordered. The span at 240–249 (RTKRRHRTKR) shows a compositional bias: basic residues.

Belongs to the universal ribosomal protein uS3 family. Part of the 30S ribosomal subunit. Forms a tight complex with proteins S10 and S14.

Its function is as follows. Binds the lower part of the 30S subunit head. Binds mRNA in the 70S ribosome, positioning it for translation. The protein is Small ribosomal subunit protein uS3 of Pelodictyon phaeoclathratiforme (strain DSM 5477 / BU-1).